We begin with the raw amino-acid sequence, 1343 residues long: MSQEYTEDKDVTLTKLSSGRRLLEALLILIALFAVWLMAALLSFNPSDPSWSQTAWHEPIHNLGGAPGAWLADTLFFIFGVMAYTIPVIIVGGCWFAWRHQSTDDYIDYFAVSLRLIGVLALILTSCGLAAINADDIWYFASGGVIGSLLSTTLQPLLHSSGGTIMLLCIWAAGLTLFTGWSWVSIAEKLGGWLLNILTFASNRTRRDDTWVDDEEYDDEYDEETDGVQRESRRARILRGALARRKRLAEKFSNPRGRQTDAALFSGKRMDDDEDIQYSARGVAADPDDVLFSGNRATQSEYDEYDPLLNGHSVTEPVAAAAAATAVTQTWAASADPIMQTPPMPGAEPVVAQPTVEWQPVPGPQTGEPVIAPAPEGYQPHPQYAQPQEAQSAPWQQPVPVASAPQYAATPATAAEYDSLAPQETQPQWQAPDAEQHWQPEPIAAEPSHMPPPVIEQPVATEPEPGIEETRPARPPLYYFEEVEEKRAREREQLAAWYQPIPEPVKENVPVKPTVSVAPSIPPVEAVAAAASLDTGIKSGALAAGAAAAAPAFSLATGGAPRPQVKEGIGPQLPRPNRVRVPTRRELASYGIKLPSQRIAEEKAREAERNQYETGAQLTDEEIDAMHQDELARQFAQSQQHRYGETYQHDTQQAEDDDTAAEAELARQFAASQQQRYSGEQPAGAQPFSLDDLDFSPMKVLVDEGPHEPLFTPGVMPESTPVQQPVAPQPQYQQPVAPQPQYQQPQQPVASQPQYQQPQQPVAPQPQYQQPQQPVAPQPQYQQPQQPVAPQPQYQQPQQPVAPQPQYQQPQQPVAPQPQYQQPQQPTAPQDSLIHPLLMRNGDSRPLQRPTTPLPSLDLLTPPPSEVEPVDTFALEQMARLVEARLADFRIKADVVNYSPGPVITRFELNLAPGVKAARISNLSRDLARSLSTVAVRVVEVIPGKPYVGLELPNKKRQTVYLREVLDNAKFRENPSPLTVVLGKDIAGDPVVADLAKMPHLLVAGTTGSGKSVGVNAMILSMLYKAQPEDVRFIMIDPKMLELSVYEGIPHLLTEVVTDMKDAANALRWSVNEMERRYKLMSALGVRNLAGYNEKIAEAARMGRPIPDPYWKPGDSMDVQHPVLEKLPYIVVLVDEFADLMMTVGKKVEELIARLAQKARAAGIHLVLATQRPSVDVITGLIKANIPTRIAFTVSSKIDSRTILDQGGAESLLGMGDMLYSGPNSTMPVRVHGAFVRDQEVHAVVQDWKARGRPQYVDGITSDSESEGGGGGFDGGEELDALFDQAVNFVTQKRKASISGVQRQFRIGYNRAARIIEQMEAQGIVSAQGHNGNREVLAPPPFE.

Topologically, residues 1-24 (MSQEYTEDKDVTLTKLSSGRRLLE) are cytoplasmic. A helical transmembrane segment spans residues 25 to 44 (ALLILIALFAVWLMAALLSF). Over 45–74 (NPSDPSWSQTAWHEPIHNLGGAPGAWLADT) the chain is Periplasmic. The helical transmembrane segment at 75 to 98 (LFFIFGVMAYTIPVIIVGGCWFAW) threads the bilayer. Residues 99 to 115 (RHQSTDDYIDYFAVSLR) lie on the Cytoplasmic side of the membrane. The helical transmembrane segment at 116–132 (LIGVLALILTSCGLAAI) threads the bilayer. The Periplasmic portion of the chain corresponds to 133–162 (NADDIWYFASGGVIGSLLSTTLQPLLHSSG). Residues 163-179 (GTIMLLCIWAAGLTLFT) form a helical membrane-spanning segment. Residues 180 to 1343 (GWSWVSIAEK…REVLAPPPFE (1164 aa)) lie on the Cytoplasmic side of the membrane. 4 disordered regions span residues 357–475 (EWQP…PARP), 556–586 (ATGG…TRRE), 600–619 (AEEK…AQLT), and 633–863 (RQFA…LTPP). Polar residues predominate over residues 385–395 (AQPQEAQSAPW). Over residues 402–415 (ASAPQYAATPATAA) the composition is skewed to low complexity. Basic and acidic residues predominate over residues 600–611 (AEEKAREAERNQ). 3 stretches are compositionally biased toward low complexity: residues 662-671 (EAELARQFAA), 721-830 (PVQQ…TAPQ), and 850-860 (PTTPLPSLDLL). Positions 988–1201 (GDPVVADLAK…FTVSSKIDSR (214 aa)) constitute a FtsK domain. 1008 to 1013 (GSGKSV) contributes to the ATP binding site. Residues 1256–1275 (YVDGITSDSESEGGGGGFDG) are disordered.

Belongs to the FtsK/SpoIIIE/SftA family. In terms of assembly, homohexamer. Forms a ring that surrounds DNA.

The protein resides in the cell inner membrane. In terms of biological role, essential cell division protein that coordinates cell division and chromosome segregation. The N-terminus is involved in assembly of the cell-division machinery. The C-terminus functions as a DNA motor that moves dsDNA in an ATP-dependent manner towards the dif recombination site, which is located within the replication terminus region. Translocation stops specifically at Xer-dif sites, where FtsK interacts with the Xer recombinase, allowing activation of chromosome unlinking by recombination. FtsK orienting polar sequences (KOPS) guide the direction of DNA translocation. FtsK can remove proteins from DNA as it translocates, but translocation stops specifically at XerCD-dif site, thereby preventing removal of XerC and XerD from dif. The sequence is that of DNA translocase FtsK (ftsK) from Salmonella typhi.